The chain runs to 1086 residues: Calcium-transporting ATPase 9, plasma membrane-type (1086 aa).

Positions 1-15 (MSTSSSNGLLLTSMS) are enriched in low complexity. The interval 1 to 50 (MSTSSSNGLLLTSMSGRHDDMEAGSAKTEEHSDHEELQHDPDDPFDIDNT) is disordered. Residues 1–194 (MSTSSSNGLL…NTYPKKKGKN (194 aa)) lie on the Cytoplasmic side of the membrane. Basic and acidic residues predominate over residues 16-42 (GRHDDMEAGSAKTEEHSDHEELQHDPD). Positions 57-68 (SLRRWRQAALVL) are interaction with calmodulin. A helical transmembrane segment spans residues 195-215 (FFMFLWEAWQDLTLIILIIAA). Residues 216–233 (VTSLALGIKTEGLKEGWL) lie on the Lumenal side of the membrane. A helical membrane pass occupies residues 234 to 254 (DGGSIAFAVLLVIVVTAVSDY). The Cytoplasmic segment spans residues 255–382 (RQSLQFQNLN…GEETPLQVRL (128 aa)). A helical transmembrane segment spans residues 383–402 (NGLATFIGIVGLSVALVVLV). The Lumenal portion of the chain corresponds to 403–439 (ALLVRYFTGTTQDTNGATQFIKGTTSISDIVDDCVKI). Residues 440-457 (FTIAVTIVVVAVPEGLPL) form a helical membrane-spanning segment. Over 458-857 (AVTLTLAYSM…RWGRSVYANI (400 aa)) the chain is Cytoplasmic. Residue Asp-495 is the 4-aspartylphosphate intermediate of the active site. Residues Asp-802 and Asp-806 each coordinate Mg(2+). A helical membrane pass occupies residues 858–876 (QKFIQFQLTVNVAALIINV). Residues 877–887 (VAAMSSGDVPL) are Lumenal-facing. The chain crosses the membrane as a helical span at residues 888-908 (KAVQLLWVNLIMDTLGALALA). The Cytoplasmic segment spans residues 909-928 (TEPPTDHLMHRTPVGRREPL). A helical transmembrane segment spans residues 929-951 (ITNIMWRNLLVQSFYQVAVLLVL). At 952 to 963 (NFAGLSILGLNH) the chain is on the lumenal side. The helical transmembrane segment at 964–988 (ENHAHAVEVKNTMIFNAFVMCQIFN) threads the bilayer. At 989–1006 (EFNARKPDEMNVFRGVNK) the chain is on the cytoplasmic side. A helical transmembrane segment spans residues 1007–1028 (NPLFVAIVGVTFILQIIIVTFL). Residues 1029–1038 (GKFAHTVRLG) are Lumenal-facing. A helical membrane pass occupies residues 1039-1060 (WQLWLASIIIGLVSWPLAIVGK). Residues 1061 to 1086 (LIPVPKTPMSVYFKKPFRKYKASRNA) are Cytoplasmic-facing.

It belongs to the cation transport ATPase (P-type) (TC 3.A.3) family. Type IIB subfamily.

The protein resides in the membrane. It carries out the reaction Ca(2+)(in) + ATP + H2O = Ca(2+)(out) + ADP + phosphate + H(+). Its activity is regulated as follows. Activated by calmodulin. This magnesium-dependent enzyme catalyzes the hydrolysis of ATP coupled with the translocation of calcium from the cytosol out of the cell or into organelles. This Arabidopsis thaliana (Mouse-ear cress) protein is Calcium-transporting ATPase 9, plasma membrane-type (ACA9).